Here is a 730-residue protein sequence, read N- to C-terminus: Translation factor GUF1 homolog, mitochondrial (730 aa).

Residues 106–289 (ELIRNFCIIA…AVVVSIPPPK (184 aa)) enclose the tr-type G domain. Residues 115–122 (AHVDHGKS), 182–186 (DTPGH), and 236–239 (NKID) contribute to the GTP site.

The protein belongs to the TRAFAC class translation factor GTPase superfamily. Classic translation factor GTPase family. LepA subfamily.

Its subcellular location is the mitochondrion inner membrane. It catalyses the reaction GTP + H2O = GDP + phosphate + H(+). Its function is as follows. Promotes mitochondrial protein synthesis. May act as a fidelity factor of the translation reaction, by catalyzing a one-codon backward translocation of tRNAs on improperly translocated ribosomes. Binds to mitochondrial ribosomes in a GTP-dependent manner. The sequence is that of Translation factor GUF1 homolog, mitochondrial from Theileria annulata.